The following is an 876-amino-acid chain: Leucine--tRNA ligase (876 aa).

A 'HIGH' region motif is present at residues 43–53 (PYPSGRIHMGH). The 'KMSKS' region signature appears at 632–636 (KMSKS). Residue lysine 635 participates in ATP binding.

The protein belongs to the class-I aminoacyl-tRNA synthetase family.

Its subcellular location is the cytoplasm. The catalysed reaction is tRNA(Leu) + L-leucine + ATP = L-leucyl-tRNA(Leu) + AMP + diphosphate. This Rhodopseudomonas palustris (strain TIE-1) protein is Leucine--tRNA ligase.